Reading from the N-terminus, the 457-residue chain is Secreted effector kinase SteC (457 aa).

K256 contacts ATP.

The protein belongs to the protein kinase superfamily. Autophosphorylated.

It localises to the secreted. Its subcellular location is the host cytoplasm. Its function is as follows. Effector proteins function to alter host cell physiology and promote bacterial survival in host tissues. This protein is a kinase, which is required for SPI-2 T3SS-dependent F-actin meshwork formation in infected host cells. The sequence is that of Secreted effector kinase SteC (steC) from Salmonella typhimurium (strain LT2 / SGSC1412 / ATCC 700720).